A 430-amino-acid chain; its full sequence is Adenylosuccinate synthetase (430 aa).

GTP is bound by residues 12–18 (GDEGKGK) and 40–42 (GHT). Asp13 acts as the Proton acceptor in catalysis. Asp13 and Gly40 together coordinate Mg(2+). IMP is bound by residues 13–16 (DEGK), 38–41 (NAGH), Thr130, Arg144, Gln224, Thr239, and Arg303. The active-site Proton donor is the His41. Residue 299-305 (TTTGRKR) coordinates substrate. GTP contacts are provided by residues Arg305, 331 to 333 (KLD), and 413 to 415 (STS).

The protein belongs to the adenylosuccinate synthetase family. Homodimer. Mg(2+) serves as cofactor.

It is found in the cytoplasm. The catalysed reaction is IMP + L-aspartate + GTP = N(6)-(1,2-dicarboxyethyl)-AMP + GDP + phosphate + 2 H(+). Its pathway is purine metabolism; AMP biosynthesis via de novo pathway; AMP from IMP: step 1/2. Functionally, plays an important role in the de novo pathway of purine nucleotide biosynthesis. Catalyzes the first committed step in the biosynthesis of AMP from IMP. In Ruegeria pomeroyi (strain ATCC 700808 / DSM 15171 / DSS-3) (Silicibacter pomeroyi), this protein is Adenylosuccinate synthetase.